A 384-amino-acid polypeptide reads, in one-letter code: 4-hydroxy-3-methylbut-2-en-1-yl diphosphate synthase (flavodoxin) (384 aa).

[4Fe-4S] cluster contacts are provided by Cys280, Cys283, Cys315, and Glu322.

This sequence belongs to the IspG family. [4Fe-4S] cluster is required as a cofactor.

The enzyme catalyses (2E)-4-hydroxy-3-methylbut-2-enyl diphosphate + oxidized [flavodoxin] + H2O + 2 H(+) = 2-C-methyl-D-erythritol 2,4-cyclic diphosphate + reduced [flavodoxin]. It functions in the pathway isoprenoid biosynthesis; isopentenyl diphosphate biosynthesis via DXP pathway; isopentenyl diphosphate from 1-deoxy-D-xylulose 5-phosphate: step 5/6. Converts 2C-methyl-D-erythritol 2,4-cyclodiphosphate (ME-2,4cPP) into 1-hydroxy-2-methyl-2-(E)-butenyl 4-diphosphate. In Frankia casuarinae (strain DSM 45818 / CECT 9043 / HFP020203 / CcI3), this protein is 4-hydroxy-3-methylbut-2-en-1-yl diphosphate synthase (flavodoxin).